Reading from the N-terminus, the 333-residue chain is tRNA(Ile)-lysidine synthase (333 aa).

ATP is bound at residue serine 33–serine 38.

It belongs to the tRNA(Ile)-lysidine synthase family.

It localises to the cytoplasm. The catalysed reaction is cytidine(34) in tRNA(Ile2) + L-lysine + ATP = lysidine(34) in tRNA(Ile2) + AMP + diphosphate + H(+). Functionally, ligates lysine onto the cytidine present at position 34 of the AUA codon-specific tRNA(Ile) that contains the anticodon CAU, in an ATP-dependent manner. Cytidine is converted to lysidine, thus changing the amino acid specificity of the tRNA from methionine to isoleucine. The sequence is that of tRNA(Ile)-lysidine synthase from Salinispora arenicola (strain CNS-205).